The chain runs to 266 residues: Signal peptidase I (266 aa).

The Cytoplasmic segment spans residues 1–20 (MQTDNTKSNTNKTAKQEWWS). The chain crosses the membrane as a helical span at residues 21 to 41 (CAFVICIALLIRILIMEPFTV). Topologically, residues 42 to 266 (PTGSMKATIL…IFRNLYNTDE (225 aa)) are periplasmic. Active-site residues include Ser-45 and Lys-108.

It belongs to the peptidase S26 family.

The protein resides in the cell inner membrane. It catalyses the reaction Cleavage of hydrophobic, N-terminal signal or leader sequences from secreted and periplasmic proteins.. The chain is Signal peptidase I (lepB) from Rickettsia akari (strain Hartford).